We begin with the raw amino-acid sequence, 1833 residues long: Protein TIC 214 (1833 aa).

6 helical membrane-spanning segments follow: residues 18 to 38 (IINSVVVVGLYYGFLTTFSIG), 67 to 87 (FIMGQLMMFISIYYTPLHLAL), 90 to 110 (PHTITVLALPYLLFHFFWNNH), 127 to 147 (LSIQCVFLNNLIFQLFNYFIL), 175 to 195 (VGWLIGHILFMKWVGLVLVWI), and 218 to 238 (IFSILFFITCVYYLGRMPSPI). The interval 254 to 301 (EETNLEIEKTSETKETKQEEEGFTEEDPSPSLFSEEKEDPDKIDETEK) is disordered. Basic and acidic residues-rich tracts occupy residues 259-273 (EIEKTSETKETKQEE) and 292-301 (DPDKIDETEK).

It belongs to the TIC214 family. Part of the Tic complex.

The protein localises to the plastid. It is found in the chloroplast inner membrane. Its function is as follows. Involved in protein precursor import into chloroplasts. May be part of an intermediate translocation complex acting as a protein-conducting channel at the inner envelope. This is Protein TIC 214 from Spinacia oleracea (Spinach).